Reading from the N-terminus, the 182-residue chain is Lipoprotein signal peptidase (182 aa).

A run of 4 helical transmembrane segments spans residues 12-32 (FLWI…TVID), 40-60 (IQVL…AFSF), 70-90 (WFFT…LKQS), and 97-117 (LPVA…DRLV). Residues D123 and D141 contribute to the active site. Residues 136–156 (AFNIADSAIFIGAALLIIDMF) form a helical membrane-spanning segment. A disordered region spans residues 161–182 (KKSEENGAESKAGSANSSETIK). The segment covering 173 to 182 (GSANSSETIK) has biased composition (polar residues).

Belongs to the peptidase A8 family.

The protein localises to the cell inner membrane. It carries out the reaction Release of signal peptides from bacterial membrane prolipoproteins. Hydrolyzes -Xaa-Yaa-Zaa-|-(S,diacylglyceryl)Cys-, in which Xaa is hydrophobic (preferably Leu), and Yaa (Ala or Ser) and Zaa (Gly or Ala) have small, neutral side chains.. Its pathway is protein modification; lipoprotein biosynthesis (signal peptide cleavage). Its function is as follows. This protein specifically catalyzes the removal of signal peptides from prolipoproteins. In Alteromonas mediterranea (strain DSM 17117 / CIP 110805 / LMG 28347 / Deep ecotype), this protein is Lipoprotein signal peptidase.